Reading from the N-terminus, the 161-residue chain is Small ribosomal subunit protein uS9 (161 aa).

Belongs to the universal ribosomal protein uS9 family.

This Rickettsia canadensis (strain McKiel) protein is Small ribosomal subunit protein uS9.